We begin with the raw amino-acid sequence, 261 residues long: SURF1-like protein (261 aa).

Helical transmembrane passes span 17–37 (LYWALLSVPVVTFGLGTWQIF) and 223–243 (LSYIITWYSISAITLAMWVFL).

The protein belongs to the SURF1 family.

Its subcellular location is the mitochondrion inner membrane. Its function is as follows. Probably involved in the biogenesis of the COX complex. The sequence is that of SURF1-like protein from Monosiga brevicollis (Choanoflagellate).